A 453-amino-acid polypeptide reads, in one-letter code: Sodium/alanine symporter AgcS (453 aa).

Over 1–17 (MDFVSLVNTVNSFVWGP) the chain is Extracellular. A helical membrane pass occupies residues 18-32 (YMLVLLLGTGIFLTL). Over 33–67 (RLGFMQIHTLPYALKLAFSKHQDETSEGDISHFQA) the chain is Cytoplasmic. The helical transmembrane segment at 68–89 (LMTALAATIGTGNIAGVATAYV) threads the bilayer. Residue threonine 75 coordinates D-alanine. Residues threonine 75 and glycine 79 each coordinate L-alanine. Residue asparagine 80 coordinates D-alanine. Residues 90–92 (LGG) lie on the Extracellular side of the membrane. A helical transmembrane segment spans residues 93–111 (PGAIFWMWVTAFFGMATKY). The Cytoplasmic portion of the chain corresponds to 112-148 (AEAVLAIKYRTVDDNGEMAGGPMYFLEKGLPDHGLGK). A helical transmembrane segment spans residues 149 to 179 (ILGVAFAFFGAFAAFGIGNMVQTNSVADAVA). Glutamine 170 lines the D-alanine pocket. Glutamine 170 provides a ligand contact to L-alanine. Residues 180–186 (SNFGVDP) are Extracellular-facing. The chain crosses the membrane as a helical span at residues 187–202 (LITGFVLAIFTAAVIL). The Cytoplasmic segment spans residues 203–206 (GGIK). A helical transmembrane segment spans residues 207–233 (SIGKATGIIVPFMAVFYILAGLVILAM). Over 234–258 (NIGYIIPAFGTIFSSAFNFSAGFGA) the chain is Extracellular. The helical transmembrane segment at 259 to 274 (LIGTAIMWGVKRGVFS) threads the bilayer. 273–274 (FS) is a binding site for D-alanine. 273-276 (FSNE) provides a ligand contact to L-alanine. At 275 to 300 (NEAGLGSAPIAAAAAKTDHPGRQALV) the chain is on the cytoplasmic side. A helical transmembrane segment spans residues 301-322 (SMTGTFLDTIVVCTITGLVLTI). Residues 323–350 (AGLKAFPGLTDLTGASLTAASFDALMPM) are Extracellular-facing. Residues 351 to 378 (GGLIVTIGLVFFAYSTVLGWSYYGEKCF) form a helical membrane-spanning segment. Residues 379–386 (EYLIGTKG) lie on the Cytoplasmic side of the membrane. The chain crosses the membrane as a helical span at residues 387 to 403 (IRLYRIAFVLVAFWGAT). Topologically, residues 404-408 (ASLPL) are extracellular. A helical membrane pass occupies residues 409 to 430 (VWNIADTLNGAMAIPNLIGLLL). Residues 431–453 (LSGVVVSETKAFNEIRKNEAKNA) are Cytoplasmic-facing.

Belongs to the alanine or glycine:cation symporter (AGCS) (TC 2.A.25) family.

The protein resides in the cell membrane. The enzyme catalyses D-alanine(in) + Na(+)(in) = D-alanine(out) + Na(+)(out). The catalysed reaction is L-alanine(in) + Na(+)(in) = L-alanine(out) + Na(+)(out). It carries out the reaction glycine(in) + Na(+)(in) = glycine(out) + Na(+)(out). In terms of biological role, catalyzes the sodium-dependent uptake of extracellular D-alanine and L-alanine. Can also transport glycine. Binds glycine and both enantiomers of alanine, while strictly excluding other amino acids. The protein is Sodium/alanine symporter AgcS of Methanococcus maripaludis (strain DSM 14266 / JCM 13030 / NBRC 101832 / S2 / LL).